An 825-amino-acid chain; its full sequence is Exocyst complex component SEC10a (825 aa).

Residues 244-266 (RGLEVAVANLQDYCNELENRLLS) are a coiled coil.

The protein belongs to the SEC10 family. In terms of assembly, the exocyst complex is composed of SEC3, SEC5, SEC6, SEC8, SEC10, EXO70A1 and EXO84B. Interacts with EXO84B. Binds to EXO70E2. Binds directly to B1L. In terms of tissue distribution, expressed in seedlings, roots, leaves and flowers.

The protein resides in the cytoplasm. The protein localises to the cytosol. Its subcellular location is the secreted. It is found in the extracellular exosome. Its function is as follows. Component of the exocyst complex involved in the docking of exocytic vesicles with fusion sites on the plasma membrane during regulated or polarized secretion. Involved in polarized cell growth and organ morphogenesis. During cytokinesis, involved in cell plate initiation, cell plate maturation and formation of new primary cell wall. The polypeptide is Exocyst complex component SEC10a (Arabidopsis thaliana (Mouse-ear cress)).